The sequence spans 557 residues: Hydroxylamine reductase (557 aa).

[4Fe-4S] cluster-binding residues include cysteine 3, cysteine 6, cysteine 19, and cysteine 26. Positions 253, 277, 321, 408, 436, 461, 495, and 497 each coordinate hybrid [4Fe-2O-2S] cluster. Cysteine 408 is modified (cysteine persulfide).

The protein belongs to the HCP family. It depends on [4Fe-4S] cluster as a cofactor. Hybrid [4Fe-2O-2S] cluster serves as cofactor.

It localises to the cytoplasm. It catalyses the reaction A + NH4(+) + H2O = hydroxylamine + AH2 + H(+). Catalyzes the reduction of hydroxylamine to form NH(3) and H(2)O. This Acidiphilium cryptum (strain JF-5) protein is Hydroxylamine reductase.